Reading from the N-terminus, the 20-residue chain is Calreticulin (20 aa).

It belongs to the calreticulin family. In terms of processing, glycosylated.

The protein localises to the endoplasmic reticulum lumen. In terms of biological role, molecular calcium-binding chaperone promoting folding, oligomeric assembly and quality control in the ER via the calreticulin/calnexin cycle. This lectin may interact transiently with almost all of the monoglucosylated glycoproteins that are synthesized in the ER. In Spinacia oleracea (Spinach), this protein is Calreticulin.